Consider the following 254-residue polypeptide: Dihydroorotate dehydrogenase B (NAD(+)), electron transfer subunit (254 aa).

Residues M1–I99 form the FAD-binding FR-type domain. FAD-binding positions include R50–S53, L67–R69, and G74–T75. Positions 218, 223, 226, and 241 each coordinate [2Fe-2S] cluster.

The protein belongs to the PyrK family. Heterotetramer of 2 PyrK and 2 PyrD type B subunits. The cofactor is [2Fe-2S] cluster. Requires FAD as cofactor.

The protein operates within pyrimidine metabolism; UMP biosynthesis via de novo pathway; orotate from (S)-dihydroorotate (NAD(+) route): step 1/1. Its function is as follows. Responsible for channeling the electrons from the oxidation of dihydroorotate from the FMN redox center in the PyrD type B subunit to the ultimate electron acceptor NAD(+). This is Dihydroorotate dehydrogenase B (NAD(+)), electron transfer subunit from Listeria monocytogenes serotype 4a (strain HCC23).